A 103-amino-acid chain; its full sequence is Large ribosomal subunit protein bL21 (103 aa).

This sequence belongs to the bacterial ribosomal protein bL21 family. In terms of assembly, part of the 50S ribosomal subunit. Contacts protein L20.

Its function is as follows. This protein binds to 23S rRNA in the presence of protein L20. This Ralstonia pickettii (strain 12J) protein is Large ribosomal subunit protein bL21.